Reading from the N-terminus, the 918-residue chain is Cell surface glycoprotein 1 (918 aa).

Residues 1-34 (MTDTNEKIRSLFLTALMVFSVFAGTIAFSGGAAA) form the signal peptide. Residues Asn37, Asn56, Asn110, Asn219, Asn250, Asn261, and Asn291 are each glycosylated (N-linked (GlcNAc...) asparagine). An N-linked (GalNAc...) asparagine glycan is attached at Asn306. Residues Asn318, Asn343, Asn392, Asn434, Asn487, Asn541, Asn555, Asn572, Asn585, Asn614, Asn715, Asn776, Asn836, and Asn845 are each glycosylated (N-linked (GlcNAc...) asparagine). The disordered stretch occupies residues 815–894 (HQDTNGNEAY…DESETTAAEG (80 aa)). Residues 833 to 846 (YTQNGSAVTDSANV) are compositionally biased toward polar residues. Residues 849–875 (VEEEQTEAPDTETETEAPDTETEEETD) show a composition bias toward acidic residues. The chain crosses the membrane as a helical span at residues 894 to 914 (GPGFTAAIALIALVAAALLAV). The PGF sorting signal motif lies at 895–897 (PGF).

It belongs to the halobacterial S-layer protein family. Post-translationally, N-glycosylated on Asn-306; this N-linked glycan is a branched trisaccharide containing 2-amino-6-sulfo-2,6-dideoxy-glucose (sulfoquinovosamine). Cleaved by the archaeosortase ArtA at the C-terminus, with removal of a short hydrophobic segment. In terms of processing, lipidation.

It localises to the secreted. Its subcellular location is the cell wall. The protein localises to the S-layer. The protein resides in the cell membrane. S-layer protein. The S-layer is a paracrystalline mono-layered assembly of proteins which coat the surface of the cell. In H.hispanica, the S-layer contains two different glycoproteins, Slg1 and Slg2, which share highly similar amino acid sequences. This Haloarcula hispanica (strain ATCC 33960 / DSM 4426 / JCM 8911 / NBRC 102182 / NCIMB 2187 / VKM B-1755) protein is Cell surface glycoprotein 1.